Consider the following 278-residue polypeptide: Protoheme IX farnesyltransferase (278 aa).

9 consecutive transmembrane segments (helical) span residues 12-32 (VIWLLILSSVVGYIYAAQTVD), 33-53 (WSKLIALIAVATLAVGGSAAF), 83-103 (ALVYSLALSAAGITLSFYLLG), 105-125 (LPGLFVALGWFFYAVVYTIWL), 130-150 (WLNILGGGFAGNATFLGGYAL), 157-177 (LPAVLISFAIYLWIPSHIWAL), 204-224 (VIISILNIASAVYILWLYLAF), 228-248 (LLGLALVFAGVAGTVATSILA), and 257-277 (MWKMYKASSPILTLFLLALVF).

It belongs to the UbiA prenyltransferase family. Protoheme IX farnesyltransferase subfamily.

The protein resides in the cell membrane. The catalysed reaction is heme b + (2E,6E)-farnesyl diphosphate + H2O = Fe(II)-heme o + diphosphate. The protein operates within porphyrin-containing compound metabolism; heme O biosynthesis; heme O from protoheme: step 1/1. Converts heme B (protoheme IX) to heme O by substitution of the vinyl group on carbon 2 of heme B porphyrin ring with a hydroxyethyl farnesyl side group. The chain is Protoheme IX farnesyltransferase from Pyrobaculum islandicum (strain DSM 4184 / JCM 9189 / GEO3).